We begin with the raw amino-acid sequence, 156 residues long: Small ribosomal subunit protein uS7 (156 aa).

It belongs to the universal ribosomal protein uS7 family. Part of the 30S ribosomal subunit. Contacts proteins S9 and S11.

Its function is as follows. One of the primary rRNA binding proteins, it binds directly to 16S rRNA where it nucleates assembly of the head domain of the 30S subunit. Is located at the subunit interface close to the decoding center, probably blocks exit of the E-site tRNA. The sequence is that of Small ribosomal subunit protein uS7 from Cutibacterium acnes (strain DSM 16379 / KPA171202) (Propionibacterium acnes).